A 577-amino-acid polypeptide reads, in one-letter code: Probable ATP-dependent RNA helicase DDX55 homolog (577 aa).

The short motif at 7 to 37 (AVATKTYREKLGPEILEVFDKSYKSFTDVQV) is the Q motif element. One can recognise a Helicase ATP-binding domain in the interval 40-218 (GTHLLNLSDV…VFGLRNAKQV (179 aa)). Residue 53–60 (SPTGSGKT) coordinates ATP. The short motif at 166–169 (DEAD) is the DEAD box element. In terms of domain architecture, Helicase C-terminal spans 231 to 393 (TLKNYFVECP…EVKVPTSTSR (163 aa)). Positions 508 to 577 (AKEKKRREKE…LSKKEIKDVL (70 aa)) are disordered. Residues 510–530 (EKKRREKEARKMKRAGGRFKS) show a composition bias toward basic residues.

Belongs to the DEAD box helicase family. DDX55/SPB4 subfamily.

It carries out the reaction ATP + H2O = ADP + phosphate + H(+). Its function is as follows. Probable ATP-binding RNA helicase. In Caenorhabditis briggsae, this protein is Probable ATP-dependent RNA helicase DDX55 homolog.